Here is a 271-residue protein sequence, read N- to C-terminus: MSLLYHKQNQELSSGVRLIQDVNASNSPMKYTAVKVLEFSADSSYEETLEAFEAGIVVLEGKVTITADDQTFEDVGQRTSIFDKIPTDSVYVSTGLAFGIRAKQAAKILIAYAPTNQTFPVRLIRGNIHQVEHRGKYNNKRLVQNILPDNLPFADKLLLVEVYTDSANWSSYPPHRHDHDDLPAESLLEEIYYHEMRPKQGFVFQRVYTDDLSLDETMAVQNQDVVVVPKGYHPVGVPDGYDSYYLNVMAGPTRVWHFHNAPEHAWIIDRQ.

The protein belongs to the isomerase IolB family.

The catalysed reaction is 5-deoxy-D-glucuronate = 5-dehydro-2-deoxy-D-gluconate. Its pathway is polyol metabolism; myo-inositol degradation into acetyl-CoA; acetyl-CoA from myo-inositol: step 4/7. Involved in the isomerization of 5-deoxy-glucuronate (5DG) to 5-dehydro-2-deoxy-D-gluconate (DKG or 2-deoxy-5-keto-D-gluconate). The polypeptide is 5-deoxy-glucuronate isomerase (Lacticaseibacillus casei (Lactobacillus casei)).